The sequence spans 1132 residues: Ubiquitin carboxyl-terminal hydrolase 43 (1132 aa).

The segment at 1–103 is disordered; sequence MDPGVGNALG…GARPPGAQGL (103 aa). Over residues 17–28 the composition is skewed to basic residues; sequence RPRRRRSLRRLL. 2 stretches are compositionally biased toward low complexity: residues 29–44 and 63–78; these read NRFL…SGDS and FACA…GSPG. One can recognise a USP domain in the interval 101 to 710; the sequence is QGLKNHGNTC…GAYILFYQKR (610 aa). The active-site Nucleophile is Cys110. His668 acts as the Proton acceptor in catalysis. Arg746 carries the post-translational modification Asymmetric dimethylarginine. Disordered regions lie at residues 839–891, 935–1008, 1024–1044, and 1057–1106; these read RRRP…TGVP, TVMP…RGQG, RTVR…SDRL, and RESP…GEQI. Residues 941 to 950 show a composition bias toward basic and acidic residues; that stretch reads GDEKPARPEG. Over residues 958–967 the composition is skewed to low complexity; that stretch reads GSSQVGSQSS. Ser970 carries the phosphoserine modification. Basic and acidic residues predominate over residues 994–1006; it reads AAMEERAPDKDRG.

It belongs to the peptidase C19 family.

It carries out the reaction Thiol-dependent hydrolysis of ester, thioester, amide, peptide and isopeptide bonds formed by the C-terminal Gly of ubiquitin (a 76-residue protein attached to proteins as an intracellular targeting signal).. In terms of biological role, may recognize and hydrolyze the peptide bond at the C-terminal Gly of ubiquitin. Involved in the processing of poly-ubiquitin precursors as well as that of ubiquitinated proteins. The sequence is that of Ubiquitin carboxyl-terminal hydrolase 43 (Usp43) from Mus musculus (Mouse).